We begin with the raw amino-acid sequence, 583 residues long: DNA ligase (583 aa).

Residue glutamate 249 participates in ATP binding. Residue lysine 251 is the N6-AMP-lysine intermediate of the active site. The ATP site is built by arginine 256, arginine 271, glutamate 301, phenylalanine 341, arginine 416, and lysine 422.

Belongs to the ATP-dependent DNA ligase family. The cofactor is Mg(2+).

The enzyme catalyses ATP + (deoxyribonucleotide)n-3'-hydroxyl + 5'-phospho-(deoxyribonucleotide)m = (deoxyribonucleotide)n+m + AMP + diphosphate.. In terms of biological role, DNA ligase that seals nicks in double-stranded DNA during DNA replication, DNA recombination and DNA repair. The sequence is that of DNA ligase from Pyrobaculum calidifontis (strain DSM 21063 / JCM 11548 / VA1).